Consider the following 369-residue polypeptide: MKSRAAVAFAPGKPLEIVEIDVAPPKKGEVLIKVTHTGVCHTDAFTLSGDDPEGVFPVVLGHEGAGVVVEVGEGVTSVKPGDHVIPLYTAECGECEFCRSGKTNLCVAVRETQGKGLMPDGTTRFSYNGQPLYHYMGCSTFSEYTVVAEVSLAKINPEANHEHVCLLGCGVTTGIGAVHNTAKVQPGDSVAVFGLGAIGLAVVQGARQAKAGRIIAIDTNPKKFELARRFGATDCINPNDYDKPIKDVLLDINKWGIDHTFECIGNVNVMRAALESAHRGWGQSVIIGVAGSGQEISTRPFQLVTGRVWKGSAFGGVKGRSQLPGMVEDAMKGDIDLEPFVTHTMSLDEINDAFDLMHEGKSIRTVIRY.

The Zn(2+) site is built by Cys40, His62, Cys92, Cys95, Cys98, Cys106, and Cys169.

The protein belongs to the zinc-containing alcohol dehydrogenase family. Class-III subfamily. Homodimer. Requires Zn(2+) as cofactor.

The protein localises to the cytoplasm. The catalysed reaction is S-(hydroxymethyl)glutathione + NADP(+) = S-formylglutathione + NADPH + H(+). The enzyme catalyses S-(hydroxymethyl)glutathione + NAD(+) = S-formylglutathione + NADH + H(+). It carries out the reaction a primary alcohol + NAD(+) = an aldehyde + NADH + H(+). It catalyses the reaction a secondary alcohol + NAD(+) = a ketone + NADH + H(+). The catalysed reaction is S-nitrosoglutathione + NADH + H(+) = S-(hydroxysulfenamide)glutathione + NAD(+). Its function is as follows. Has high formaldehyde dehydrogenase activity in the presence of glutathione and catalyzes the oxidation of normal alcohols in a reaction that is not GSH-dependent. In addition, hemithiolacetals other than those formed from GSH, including omega-thiol fatty acids, also are substrates. Also acts as a S-nitroso-glutathione reductase by catalyzing the NADH-dependent reduction of S-nitrosoglutathione. The sequence is that of S-(hydroxymethyl)glutathione dehydrogenase (frmA) from Escherichia coli O1:K1 / APEC.